The chain runs to 174 residues: Adenine phosphoribosyltransferase (174 aa).

It belongs to the purine/pyrimidine phosphoribosyltransferase family. As to quaternary structure, homodimer.

It localises to the cytoplasm. It carries out the reaction AMP + diphosphate = 5-phospho-alpha-D-ribose 1-diphosphate + adenine. The protein operates within purine metabolism; AMP biosynthesis via salvage pathway; AMP from adenine: step 1/1. Catalyzes a salvage reaction resulting in the formation of AMP, that is energically less costly than de novo synthesis. This is Adenine phosphoribosyltransferase from Lachnoclostridium phytofermentans (strain ATCC 700394 / DSM 18823 / ISDg) (Clostridium phytofermentans).